Consider the following 561-residue polypeptide: MGQGLLQIGLTLCIVIAITPVLGRYIARVFLGERTILDRVMNPIERSVYVISGVRPKDEMTGWQYIRAILYTNLFMGILVYSLIYFQRLLPWNPNGLGVPSWDIVLHTVISFVTNTDQQHYAGETTLSYFSQVAALGFLMFTSAATGLAVGIAFIRGLTGRKLGNFYVDLTRGITRILLPISVIGAIALVLLGVPQTIGETLTITTLEGGTQYIARGPVASFEMIKMLGENGGGFFAANSAHPFENPNGLTNLIETIAMIAIPAAMIYTYGVFAKNIKQAWLLFWMVFIVFVILVWVAAGGELQGNPLVNGTLGIEQPNLEGKEVRFGWAETALWAVMTTATMCGAVNGMHDSLMPQGLFATLFNLFLQIIWGGQGTGTAYLFIYLILTVFLTGLMVGRTPEIFGRKIEKREIVLASLILLIHPIVVLIPSAIALAYPFSLSGISNPSFHGISQVVYEYASASANNGSGLEGLTDNSLWWNLSTSLSILTGRYVPIIAMLLLADSMSRKQTVPQTPGTLKTDSLIFTTVTAGIVLILGVLTFFPVLALGPIAEGFKLASGS.

A run of 12 helical transmembrane segments spans residues 2–22 (GQGLLQIGLTLCIVIAITPVL), 66–86 (IRAILYTNLFMGILVYSLIYF), 135–155 (ALGFLMFTSAATGLAVGIAFI), 177–197 (ILLPISVIGAIALVLLGVPQT), 253–273 (LIETIAMIAIPAAMIYTYGVF), 280–300 (AWLLFWMVFIVFVILVWVAAG), 327–347 (FGWAETALWAVMTTATMCGAV), 354–374 (LMPQGLFATLFNLFLQIIWGG), 378–398 (GTAYLFIYLILTVFLTGLMVG), 413–433 (IVLASLILLIHPIVVLIPSAI), 482–502 (LSTSLSILTGRYVPIIAMLLL), and 531–551 (AGIVLILGVLTFFPVLALGPI).

Belongs to the KdpA family. The system is composed of three essential subunits: KdpA, KdpB and KdpC.

It is found in the cell inner membrane. Its function is as follows. Part of the high-affinity ATP-driven potassium transport (or Kdp) system, which catalyzes the hydrolysis of ATP coupled with the electrogenic transport of potassium into the cytoplasm. This subunit binds the periplasmic potassium ions and delivers the ions to the membrane domain of KdpB through an intramembrane tunnel. The chain is Potassium-transporting ATPase potassium-binding subunit from Nostoc sp. (strain PCC 7120 / SAG 25.82 / UTEX 2576).